Here is a 554-residue protein sequence, read N- to C-terminus: (E)-nerolidol synthase TPS18VF (554 aa).

(2E,6E)-farnesyl diphosphate contacts are provided by arginine 276, aspartate 313, aspartate 317, arginine 455, and aspartate 458. Mg(2+)-binding residues include aspartate 313 and aspartate 317. The short motif at 313–317 (DDIFD) is the DDXXD motif element. The Mg(2+) site is built by aspartate 458, serine 462, and glutamate 466.

Belongs to the terpene synthase family. Tpsb subfamily. Requires Mg(2+) as cofactor. It depends on Mn(2+) as a cofactor. In terms of tissue distribution, highly expressed in glandular trichomes.

It carries out the reaction (2E,6E)-farnesyl diphosphate + H2O = (6E)-nerolidol + diphosphate. The enzyme catalyses (2E)-geranyl diphosphate + H2O = (S)-linalool + diphosphate. It participates in secondary metabolite biosynthesis; terpenoid biosynthesis. In terms of biological role, involved in sesquiterpene olefins biosynthesis, constituants of cannabinoids and terpenoids-rich resins. Catalyzes primarily the conversion of (2E)-farnesyl diphosphate to (E)-nerolidol, and the conversion of (2E)-geranyl diphosphate to (+)linalool. The chain is (E)-nerolidol synthase TPS18VF from Cannabis sativa (Hemp).